The sequence spans 87 residues: Neurotoxin Cex4 (87 aa).

Residues 1-19 (MNSLLMITACLFLIGTVWA) form the signal peptide. Residues 20–85 (KEGYLVNKST…TYPLPNKSCG (66 aa)) enclose the LCN-type CS-alpha/beta domain. Disulfide bonds link cysteine 31–cysteine 84, cysteine 35–cysteine 60, cysteine 44–cysteine 65, and cysteine 48–cysteine 67. Cysteine 84 is modified (cysteine amide). A propeptide spanning residues 85–87 (GRK) is cleaved from the precursor.

This sequence belongs to the long (4 C-C) scorpion toxin superfamily. Sodium channel inhibitor family. Beta subfamily. As to expression, expressed by the venom gland.

It localises to the secreted. Functionally, beta toxins bind voltage-independently at site-4 of sodium channels (Nav) and shift the voltage of activation toward more negative potentials thereby affecting sodium channel activation and promoting spontaneous and repetitive firing. In Centruroides exilicauda (Bark scorpion), this protein is Neurotoxin Cex4.